The sequence spans 432 residues: Glutamate-1-semialdehyde 2,1-aminomutase (432 aa).

Residue Lys269 is modified to N6-(pyridoxal phosphate)lysine.

This sequence belongs to the class-III pyridoxal-phosphate-dependent aminotransferase family. HemL subfamily. In terms of assembly, homodimer. It depends on pyridoxal 5'-phosphate as a cofactor.

It is found in the cytoplasm. The catalysed reaction is (S)-4-amino-5-oxopentanoate = 5-aminolevulinate. It participates in porphyrin-containing compound metabolism; protoporphyrin-IX biosynthesis; 5-aminolevulinate from L-glutamyl-tRNA(Glu): step 2/2. This chain is Glutamate-1-semialdehyde 2,1-aminomutase, found in Desulforudis audaxviator (strain MP104C).